Consider the following 305-residue polypeptide: tRNA pseudouridine synthase B (305 aa).

Asp-41 serves as the catalytic Nucleophile.

Belongs to the pseudouridine synthase TruB family. Type 1 subfamily.

The enzyme catalyses uridine(55) in tRNA = pseudouridine(55) in tRNA. Functionally, responsible for synthesis of pseudouridine from uracil-55 in the psi GC loop of transfer RNAs. The protein is tRNA pseudouridine synthase B of Prochlorococcus marinus subsp. pastoris (strain CCMP1986 / NIES-2087 / MED4).